The primary structure comprises 441 residues: Protein FAM83A (441 aa).

Disordered regions lie at residues 81-108 (SNDNQTEGENGSAANGNKSESYYPMNSD) and 312-368 (GMSI…SPLQ). Residues 314 to 327 (SIMSDSNPESINTT) show a composition bias toward polar residues. The segment covering 328–354 (SEPFSSISTASISNDSQRPKSPVSTTP) has biased composition (low complexity).

It belongs to the FAM83 family.

Its subcellular location is the cytoplasm. Its function is as follows. May function in the epidermal growth factor receptor/EGFR signaling pathway. The protein is Protein FAM83A of Xenopus tropicalis (Western clawed frog).